A 423-amino-acid polypeptide reads, in one-letter code: Mannitol-1-phosphate 5-dehydrogenase (423 aa).

3 residues coordinate Zn(2+): C40, H69, and E70.

The protein belongs to the zinc-containing alcohol dehydrogenase family. The cofactor is Zn(2+).

It carries out the reaction D-mannitol 1-phosphate + NAD(+) = beta-D-fructose 6-phosphate + NADH + H(+). Functionally, seems to be involved in mannitol utilization. Complements an E.coli mtlD deletion mutant. In Aliivibrio fischeri (strain ATCC 700601 / ES114) (Vibrio fischeri), this protein is Mannitol-1-phosphate 5-dehydrogenase.